We begin with the raw amino-acid sequence, 327 residues long: Thiamine-binding periplasmic protein (327 aa).

Residues 1–18 form the signal peptide; the sequence is MLKKYLPLLLLCAAPAFA. Thiamine is bound by residues 59–60, 161–162, Trp197, and 215–218; these read DG, ST, and YTTS.

The protein belongs to the bacterial solute-binding protein 1 family. The complex is composed of two ATP-binding proteins (ThiQ), two transmembrane proteins (ThiP) and a solute-binding protein (ThiB).

It localises to the periplasm. Part of the ABC transporter complex ThiBPQ involved in thiamine import. Is also involved in thiamine pyrophosphate transport. This chain is Thiamine-binding periplasmic protein, found in Salmonella typhimurium (strain LT2 / SGSC1412 / ATCC 700720).